The primary structure comprises 445 residues: Reticulon-4 receptor-like 1 (445 aa).

Positions 1–24 (MLRKGCCVELLLLLLAGELPLGGG) are cleaved as a signal peptide. Positions 25–54 (CPRDCVCYPAPMTVSCQAHNFAAIPEGIPE) constitute an LRRNT domain. 8 LRR repeats span residues 55-76 (DSER…HFSP), 77-98 (AMVT…TFEG), 101-123 (HLEE…TFQG), 126-147 (KLHA…IFGG), 150-171 (SLQY…IFVD), 174-195 (NLSH…IFRG), 198-219 (NLDR…AFHD), and 222-243 (RLTT…CLAP). The LRRCT domain maps to 255 to 306 (NAWDCGCRARSLWEWLRRFRGSSSAVPCATPELRQGQDLKLLRVEDFRNCTG). Disordered stretches follow at residues 307-377 (PVSP…SGKE) and 401-424 (RPKR…QQAS). 2 stretches are compositionally biased toward basic residues: residues 352–366 (GYKK…HRNR) and 401–413 (RPKR…RRTP). S424 carries GPI-anchor amidated serine lipidation. Residues 424–444 (SSGTALGAPLLAWILGLAVTL) form a helical membrane-spanning segment. The propeptide at 425 to 445 (SGTALGAPLLAWILGLAVTLR) is removed in mature form.

The protein belongs to the Nogo receptor family. In terms of assembly, identified in a complex that contains RTN4R, RTN4RL1 and NGFR; the interaction depends on the presence of chondroitin sulfate proteoglycans. Does not interact with MAG, OMG and RTN4. In terms of tissue distribution, detected in brain (at protein level). Detected in retina ganglion cell layer and inner nuclear layer.

It is found in the cell membrane. It localises to the membrane raft. The protein localises to the perikaryon. Its subcellular location is the cell projection. Functionally, cell surface receptor that plays a functionally redundant role in postnatal brain development and in regulating axon regeneration in the adult central nervous system. Contributes to normal axon migration across the brain midline and normal formation of the corpus callosum. Protects motoneurons against apoptosis; protection against apoptosis is probably mediated by MAG. Plays a role in inhibiting neurite outgrowth and axon regeneration via its binding to neuronal chondroitin sulfate proteoglycans. Binds heparin. Like other family members, plays a role in restricting the number dendritic spines and the number of synapses that are formed during brain development. Signaling mediates activation of Rho and downstream reorganization of the actin cytoskeleton. This is Reticulon-4 receptor-like 1 from Mus musculus (Mouse).